Consider the following 360-residue polypeptide: Phospho-N-acetylmuramoyl-pentapeptide-transferase (360 aa).

10 consecutive transmembrane segments (helical) span residues 27 to 47 (GAFL…INVL), 69 to 89 (VGTP…STLM), 93 to 113 (WDNP…LIGF), 134 to 154 (LLLG…NHPA), 168 to 188 (VLLN…VGAA), 199 to 219 (GLAI…AYAV), 239 to 259 (ILIF…YNAP), 262 to 282 (AVFM…AIAI), 288 to 308 (LVLA…IIQV), and 337 to 357 (TIVI…LATL).

The protein belongs to the glycosyltransferase 4 family. MraY subfamily. Mg(2+) is required as a cofactor.

The protein localises to the cell inner membrane. The catalysed reaction is UDP-N-acetyl-alpha-D-muramoyl-L-alanyl-gamma-D-glutamyl-meso-2,6-diaminopimeloyl-D-alanyl-D-alanine + di-trans,octa-cis-undecaprenyl phosphate = di-trans,octa-cis-undecaprenyl diphospho-N-acetyl-alpha-D-muramoyl-L-alanyl-D-glutamyl-meso-2,6-diaminopimeloyl-D-alanyl-D-alanine + UMP. Its pathway is cell wall biogenesis; peptidoglycan biosynthesis. Its function is as follows. Catalyzes the initial step of the lipid cycle reactions in the biosynthesis of the cell wall peptidoglycan: transfers peptidoglycan precursor phospho-MurNAc-pentapeptide from UDP-MurNAc-pentapeptide onto the lipid carrier undecaprenyl phosphate, yielding undecaprenyl-pyrophosphoryl-MurNAc-pentapeptide, known as lipid I. In Ruegeria sp. (strain TM1040) (Silicibacter sp.), this protein is Phospho-N-acetylmuramoyl-pentapeptide-transferase.